The following is a 61-amino-acid chain: UPF0434 protein PFLU_3771 (61 aa).

The protein belongs to the UPF0434 family.

This chain is UPF0434 protein PFLU_3771, found in Pseudomonas fluorescens (strain SBW25).